The following is a 381-amino-acid chain: Succinyl-diaminopimelate desuccinylase (381 aa).

His-69 provides a ligand contact to Zn(2+). Residue Asp-71 is part of the active site. Asp-103 is a binding site for Zn(2+). Residue Glu-137 is the Proton acceptor of the active site. Zn(2+) is bound by residues Glu-138, Glu-166, and His-355.

This sequence belongs to the peptidase M20A family. DapE subfamily. As to quaternary structure, homodimer. Zn(2+) serves as cofactor. Co(2+) is required as a cofactor.

It catalyses the reaction N-succinyl-(2S,6S)-2,6-diaminopimelate + H2O = (2S,6S)-2,6-diaminopimelate + succinate. It participates in amino-acid biosynthesis; L-lysine biosynthesis via DAP pathway; LL-2,6-diaminopimelate from (S)-tetrahydrodipicolinate (succinylase route): step 3/3. Its function is as follows. Catalyzes the hydrolysis of N-succinyl-L,L-diaminopimelic acid (SDAP), forming succinate and LL-2,6-diaminopimelate (DAP), an intermediate involved in the bacterial biosynthesis of lysine and meso-diaminopimelic acid, an essential component of bacterial cell walls. In Rickettsia felis (strain ATCC VR-1525 / URRWXCal2) (Rickettsia azadi), this protein is Succinyl-diaminopimelate desuccinylase.